A 479-amino-acid chain; its full sequence is Sulfate adenylyltransferase subunit 1 (479 aa).

The 217-residue stretch at 22–238 (KDMLRFLTCG…DSMDISKEPK (217 aa)) folds into the tr-type G domain. Residues 31–38 (GSVDDGKS) form a G1 region. 31–38 (GSVDDGKS) contacts GTP. Residues 89–93 (GITID) form a G2 region. Residues 110–113 (DTPG) are G3. GTP-binding positions include 110 to 114 (DTPGH) and 165 to 168 (NKMD). The segment at 165–168 (NKMD) is G4. Residues 202–204 (SAL) form a G5 region.

The protein belongs to the TRAFAC class translation factor GTPase superfamily. Classic translation factor GTPase family. CysN/NodQ subfamily. In terms of assembly, heterodimer composed of CysD, the smaller subunit, and CysN.

The catalysed reaction is sulfate + ATP + H(+) = adenosine 5'-phosphosulfate + diphosphate. The protein operates within sulfur metabolism; hydrogen sulfide biosynthesis; sulfite from sulfate: step 1/3. Functionally, with CysD forms the ATP sulfurylase (ATPS) that catalyzes the adenylation of sulfate producing adenosine 5'-phosphosulfate (APS) and diphosphate, the first enzymatic step in sulfur assimilation pathway. APS synthesis involves the formation of a high-energy phosphoric-sulfuric acid anhydride bond driven by GTP hydrolysis by CysN coupled to ATP hydrolysis by CysD. The chain is Sulfate adenylyltransferase subunit 1 from Sulfurovum sp. (strain NBC37-1).